Reading from the N-terminus, the 492-residue chain is KRAB-A domain-containing protein 2 (492 aa).

The KRAB domain occupies 36–117; the sequence is LFQEATAFEN…MREKFLMSVT (82 aa). Residue S115 is modified to Phosphoserine. T117 bears the Phosphothreonine mark. The 169-residue stretch at 247–415 folds into the Integrase catalytic domain; it reads RGLAPKPMTF…SPFEAMFGYK (169 aa). A coiled-coil region spans residues 427–457; the sequence is RETVATLQTEEELEIAEEQLENSLWIRQEER. Over residues 455 to 465 the composition is skewed to basic and acidic residues; the sequence is EERAEIGADRS. The interval 455–492 is disordered; that stretch reads EERAEIGADRSDMDDDMDPTPEASEPSTSQGTSGLLCW. Over residues 479-492 the composition is skewed to polar residues; sequence EPSTSQGTSGLLCW.

The polypeptide is KRAB-A domain-containing protein 2 (KRBA2) (Homo sapiens (Human)).